Consider the following 789-residue polypeptide: Kin of IRRE-like protein 1 (789 aa).

Positions 1-47 (MTLENRSTCLMTCQSSLLPKKPRFLSQKMWAPHLVVAYLIFVTLALA) are cleaved as a signal peptide. Residues Asn5, Asn78, and Asn172 are each glycosylated (N-linked (GlcNAc...) asparagine). Topologically, residues 48 to 531 (LPGTQTRFSQ…REVLPVGIIA (484 aa)) are extracellular. 5 Ig-like C2-type domains span residues 49 to 147 (PGTQ…AKLT), 152 to 248 (PEDT…TSIE), 255 to 335 (PTVT…TLVN), 340 to 419 (PRIV…EVPL), and 424 to 520 (PPII…IQLE). Cysteines 74 and 132 form a disulfide. Intrachain disulfides connect Cys175-Cys232 and Cys276-Cys319. Asn329 carries an N-linked (GlcNAc...) asparagine glycan. Cys361 and Cys403 are oxidised to a cystine. The Cell attachment site motif lies at 437 to 439 (RGD). Residues Cys445 and Cys504 are joined by a disulfide bond. The N-linked (GlcNAc...) asparagine glycan is linked to Asn503. The chain crosses the membrane as a helical span at residues 532 to 552 (GATIGAGILLVFSFAALVFFL). The Cytoplasmic segment spans residues 553–789 (YRRRKGSRKD…RFQQRMQTHV (237 aa)). Phosphoserine is present on Ser606. Phosphotyrosine; by FYN is present on residues Tyr637 and Tyr638. Phosphotyrosine is present on residues Tyr654 and Tyr657. The disordered stretch occupies residues 687–713 (RAPASDYGTEPTPSGPSAPGGTDTTSQ). Low complexity predominate over residues 694 to 712 (GTEPTPSGPSAPGGTDTTS). Residue Tyr756 is modified to Phosphotyrosine.

It belongs to the immunoglobulin superfamily. As to quaternary structure, interacts with TJP1/ZO-1 and with NPHS2/podocin (via the C-terminus). Interacts with NPHS1/nephrin (via the Ig-like domains); this interaction is dependent on KIRREL1 glycosylation. Homodimer (via the Ig-like domains). Interacts when tyrosine-phosphorylated with GRB2. In terms of processing, phosphorylation probably regulates the interaction with NPHS2. Phosphorylated at Tyr-637 and Tyr-638 by FYN, leading to GRB2 binding. N-glycosylated.

It is found in the cell membrane. Required for proper function of the glomerular filtration barrier. It is involved in the maintenance of a stable podocyte architecture with interdigitating foot processes connected by specialized cell-cell junctions, known as the slit diaphragm. It is a signaling protein that needs the presence of TEC kinases to fully trans-activate the transcription factor AP-1. The protein is Kin of IRRE-like protein 1 (Kirrel1) of Rattus norvegicus (Rat).